The primary structure comprises 100 residues: MIREECLLKVLRAPHVSEKASTAMEKSNTIVLKVAKDATKAEIKAAVQKLFEVEVEVVNTLVVKGKVKRHGQRIGRRSDWKKAYVTLKEGQNLDFVGGAE.

Belongs to the universal ribosomal protein uL23 family. Part of the 50S ribosomal subunit. Contacts protein L29, and trigger factor when it is bound to the ribosome.

Its function is as follows. One of the early assembly proteins it binds 23S rRNA. One of the proteins that surrounds the polypeptide exit tunnel on the outside of the ribosome. Forms the main docking site for trigger factor binding to the ribosome. The sequence is that of Large ribosomal subunit protein uL23 from Shigella dysenteriae serotype 1 (strain Sd197).